The chain runs to 145 residues: Large ribosomal subunit protein uL11 (145 aa).

The protein belongs to the universal ribosomal protein uL11 family. As to quaternary structure, part of the ribosomal stalk of the 50S ribosomal subunit. Interacts with L10 and the large rRNA to form the base of the stalk. L10 forms an elongated spine to which L12 dimers bind in a sequential fashion forming a multimeric L10(L12)X complex. One or more lysine residues are methylated.

Functionally, forms part of the ribosomal stalk which helps the ribosome interact with GTP-bound translation factors. The polypeptide is Large ribosomal subunit protein uL11 (Francisella philomiragia subsp. philomiragia (strain ATCC 25017 / CCUG 19701 / FSC 153 / O#319-036)).